A 334-amino-acid chain; its full sequence is Syntaxin-18 (334 aa).

The Cytoplasmic segment spans residues methionine 1–asparagine 308. 2 disordered regions span residues glycine 29–serine 50 and leucine 166–glutamate 225. Composition is skewed to basic and acidic residues over residues glycine 33–serine 50, leucine 166–serine 186, and serine 193–leucine 207. Residues isoleucine 242 to alanine 304 enclose the t-SNARE coiled-coil homology domain. A helical; Anchor for type IV membrane protein membrane pass occupies residues alanine 309 to leucine 329. Topologically, residues aspartate 330–serine 334 are vesicular.

The protein belongs to the syntaxin family. Component of a SNARE complex consisting of STX18, USE1L, BNIP1/SEC20L, and SEC22B. RINT1/TIP20L and ZW10 are associated with the complex through interaction with BNIP1/SEC20L. Interacts directly with USE1L and BNIP1/SEC20L.

It is found in the endoplasmic reticulum membrane. The protein localises to the golgi apparatus membrane. Functionally, syntaxin that may be involved in targeting and fusion of Golgi-derived retrograde transport vesicles with the ER. This Rattus norvegicus (Rat) protein is Syntaxin-18 (Stx18).